The chain runs to 141 residues: Hemoglobin subunit alpha (141 aa).

The region spanning V1–R141 is the Globin domain. S3 is subject to Phosphoserine. N6-succinyllysine is present on residues K7 and K11. At K16 the chain carries N6-acetyllysine; alternate. K16 is modified (N6-succinyllysine; alternate). Position 24 is a phosphotyrosine (Y24). S35 carries the post-translational modification Phosphoserine. Position 40 is an N6-succinyllysine (K40). S49 carries the phosphoserine modification. Residue H58 participates in O2 binding. Position 87 (H87) interacts with heme b. Position 102 is a phosphoserine (S102). T108 bears the Phosphothreonine mark. Phosphoserine occurs at positions 124 and 131. T134 and T137 each carry phosphothreonine. S138 bears the Phosphoserine mark.

Belongs to the globin family. As to quaternary structure, heterotetramer of two alpha chains and two beta chains. In terms of tissue distribution, red blood cells.

Involved in oxygen transport from the lung to the various peripheral tissues. Its function is as follows. Hemopressin acts as an antagonist peptide of the cannabinoid receptor CNR1. Hemopressin-binding efficiently blocks cannabinoid receptor CNR1 and subsequent signaling. This Saguinus oedipus (Cotton-top tamarin) protein is Hemoglobin subunit alpha (HBA).